Reading from the N-terminus, the 152-residue chain is Outer membrane protein assembly factor BamE (152 aa).

Residues 1-32 (MIDQNHDSEEQAQMQKLTRTVTLTVALTLVSG) form the signal peptide. Cys33 carries N-palmitoyl cysteine lipidation. The S-diacylglycerol cysteine moiety is linked to residue Cys33. The interval 114 to 152 (IDRHGDFSRPPSVADERGIGPTDSTNARGNLLNARPDDE) is disordered.

Belongs to the BamE family. Part of the Bam complex.

The protein localises to the cell outer membrane. Part of the outer membrane protein assembly complex, which is involved in assembly and insertion of beta-barrel proteins into the outer membrane. The polypeptide is Outer membrane protein assembly factor BamE (Halomonas elongata (strain ATCC 33173 / DSM 2581 / NBRC 15536 / NCIMB 2198 / 1H9)).